The sequence spans 446 residues: tRNA-2-methylthio-N(6)-dimethylallyladenosine synthase (446 aa).

Residues 2-122 (KKAYVKSYGC…LPDLLRQSRE (121 aa)) enclose the MTTase N-terminal domain. The [4Fe-4S] cluster site is built by Cys-11, Cys-47, Cys-85, Cys-157, Cys-161, and Cys-164. Positions 143-375 (RNRGVTGFLT…QQLLDQQRHA (233 aa)) constitute a Radical SAM core domain. The TRAM domain occupies 378–440 (AAAVGTVAEI…SNSLFGEVLE (63 aa)).

The protein belongs to the methylthiotransferase family. MiaB subfamily. In terms of assembly, monomer. Requires [4Fe-4S] cluster as cofactor.

The protein resides in the cytoplasm. The catalysed reaction is N(6)-dimethylallyladenosine(37) in tRNA + (sulfur carrier)-SH + AH2 + 2 S-adenosyl-L-methionine = 2-methylsulfanyl-N(6)-dimethylallyladenosine(37) in tRNA + (sulfur carrier)-H + 5'-deoxyadenosine + L-methionine + A + S-adenosyl-L-homocysteine + 2 H(+). Its function is as follows. Catalyzes the methylthiolation of N6-(dimethylallyl)adenosine (i(6)A), leading to the formation of 2-methylthio-N6-(dimethylallyl)adenosine (ms(2)i(6)A) at position 37 in tRNAs that read codons beginning with uridine. The chain is tRNA-2-methylthio-N(6)-dimethylallyladenosine synthase from Methylorubrum populi (strain ATCC BAA-705 / NCIMB 13946 / BJ001) (Methylobacterium populi).